The sequence spans 116 residues: Iron-sulfur cluster insertion protein ErpA (116 aa).

Residues C44, C108, and C110 each coordinate iron-sulfur cluster.

This sequence belongs to the HesB/IscA family. Homodimer. Iron-sulfur cluster serves as cofactor.

In terms of biological role, required for insertion of 4Fe-4S clusters for at least IspG. The chain is Iron-sulfur cluster insertion protein ErpA from Pseudomonas syringae pv. syringae (strain B728a).